The sequence spans 216 residues: Cytochrome c oxidase subunit 2 (216 aa).

Residues L1–S8 lie on the Mitochondrial intermembrane side of the membrane. The helical transmembrane segment at P9–M39 threads the bilayer. Over L40–Q53 the chain is Mitochondrial matrix. The chain crosses the membrane as a helical span at residues E54–T81. The Mitochondrial intermembrane segment spans residues D82–W216. H155, C190, E192, C194, H198, and M201 together coordinate Cu cation. E192 is a binding site for Mg(2+).

Belongs to the cytochrome c oxidase subunit 2 family. As to quaternary structure, component of the cytochrome c oxidase (complex IV, CIV), a multisubunit enzyme composed of 14 subunits. The complex is composed of a catalytic core of 3 subunits MT-CO1, MT-CO2 and MT-CO3, encoded in the mitochondrial DNA, and 11 supernumerary subunits COX4I, COX5A, COX5B, COX6A, COX6B, COX6C, COX7A, COX7B, COX7C, COX8 and NDUFA4, which are encoded in the nuclear genome. The complex exists as a monomer or a dimer and forms supercomplexes (SCs) in the inner mitochondrial membrane with NADH-ubiquinone oxidoreductase (complex I, CI) and ubiquinol-cytochrome c oxidoreductase (cytochrome b-c1 complex, complex III, CIII), resulting in different assemblies (supercomplex SCI(1)III(2)IV(1) and megacomplex MCI(2)III(2)IV(2)). Found in a complex with TMEM177, COA6, COX18, COX20, SCO1 and SCO2. Interacts with TMEM177 in a COX20-dependent manner. Interacts with COX20. Interacts with COX16. It depends on Cu cation as a cofactor.

The protein resides in the mitochondrion inner membrane. The catalysed reaction is 4 Fe(II)-[cytochrome c] + O2 + 8 H(+)(in) = 4 Fe(III)-[cytochrome c] + 2 H2O + 4 H(+)(out). Component of the cytochrome c oxidase, the last enzyme in the mitochondrial electron transport chain which drives oxidative phosphorylation. The respiratory chain contains 3 multisubunit complexes succinate dehydrogenase (complex II, CII), ubiquinol-cytochrome c oxidoreductase (cytochrome b-c1 complex, complex III, CIII) and cytochrome c oxidase (complex IV, CIV), that cooperate to transfer electrons derived from NADH and succinate to molecular oxygen, creating an electrochemical gradient over the inner membrane that drives transmembrane transport and the ATP synthase. Cytochrome c oxidase is the component of the respiratory chain that catalyzes the reduction of oxygen to water. Electrons originating from reduced cytochrome c in the intermembrane space (IMS) are transferred via the dinuclear copper A center (CU(A)) of subunit 2 and heme A of subunit 1 to the active site in subunit 1, a binuclear center (BNC) formed by heme A3 and copper B (CU(B)). The BNC reduces molecular oxygen to 2 water molecules using 4 electrons from cytochrome c in the IMS and 4 protons from the mitochondrial matrix. The sequence is that of Cytochrome c oxidase subunit 2 (MT-CO2) from Callimico goeldii (Goeldi's marmoset).